The chain runs to 143 residues: Large-conductance mechanosensitive channel (143 aa).

2 consecutive transmembrane segments (helical) span residues 10 to 30 and 89 to 109; these read FAVK…GAFS and GSFI…FLMV.

It belongs to the MscL family. Homopentamer.

It is found in the cell inner membrane. Functionally, channel that opens in response to stretch forces in the membrane lipid bilayer. May participate in the regulation of osmotic pressure changes within the cell. This chain is Large-conductance mechanosensitive channel, found in Burkholderia multivorans (strain ATCC 17616 / 249).